Reading from the N-terminus, the 89-residue chain is Small ribosomal subunit protein uS15 (89 aa).

This sequence belongs to the universal ribosomal protein uS15 family. In terms of assembly, part of the 30S ribosomal subunit. Forms a bridge to the 50S subunit in the 70S ribosome, contacting the 23S rRNA.

Its function is as follows. One of the primary rRNA binding proteins, it binds directly to 16S rRNA where it helps nucleate assembly of the platform of the 30S subunit by binding and bridging several RNA helices of the 16S rRNA. Functionally, forms an intersubunit bridge (bridge B4) with the 23S rRNA of the 50S subunit in the ribosome. The protein is Small ribosomal subunit protein uS15 of Corynebacterium diphtheriae (strain ATCC 700971 / NCTC 13129 / Biotype gravis).